An 87-amino-acid polypeptide reads, in one-letter code: U3-theraphotoxin-Hhn1a 16 (87 aa).

The signal sequence occupies residues 1–24 (MVNMKASMFLTFAGLVLLFVVCYA). Residues 25-52 (SESEEKEFPKEMLSSIFAVDNDFKQGER) constitute a propeptide that is removed on maturation. 3 disulfides stabilise this stretch: Cys-54/Cys-67, Cys-61/Cys-72, and Cys-66/Cys-79.

Belongs to the neurotoxin 10 (Hwtx-1) family. 51 (Hntx-8) subfamily. Hntx-8 sub-subfamily. Expressed by the venom gland.

Its subcellular location is the secreted. Its function is as follows. Ion channel inhibitor. The chain is U3-theraphotoxin-Hhn1a 16 from Cyriopagopus hainanus (Chinese bird spider).